Reading from the N-terminus, the 348-residue chain is MSVQLTERQRQILRHVVEEYLRSGRAVGSKALVERASLSVSPATVRNDMSVLEALDFLAHPHTSAGRVPTEHGLRYYVQHLMEESQLSSEEQLMIRHQFRQVEQQVPSWLKLAASVLAETSGNVGLVTPPRARVERLRHFELISLRRRVVLLVLVTQSGTIHQSLLELPQPLEQEELSALSQRLNPELRWLDRAAIERRAQGAEPTVALVLQRLAEALHFIEHQQRSELYAEGLEHVIRQPEFAQANLAHLLLEVLRGGMLLTWLLPRLDPSEEVRVLIGSDLALRELRPFSLILTAYRSGAESTGWLGVLGPQRMAYARAVAAVRFLASVVSELMSELSGGPDREGG.

Belongs to the HrcA family.

Negative regulator of class I heat shock genes (grpE-dnaK-dnaJ and groELS operons). Prevents heat-shock induction of these operons. The chain is Heat-inducible transcription repressor HrcA from Thermomicrobium roseum (strain ATCC 27502 / DSM 5159 / P-2).